The following is a 351-amino-acid chain: Silk gland factor 3 (351 aa).

Disordered stretches follow at residues alanine 61–arginine 88 and serine 131–serine 154. The segment covering aspartate 135 to aspartate 145 has biased composition (basic and acidic residues). Positions glutamate 149–aspartate 223 constitute a POU-specific domain. Positions lysine 241–threonine 300 form a DNA-binding region, homeobox. Positions glycine 314–histidine 351 are disordered.

The protein belongs to the POU transcription factor family. Class-3 subfamily. In terms of tissue distribution, restricted to the middle silk gland.

It localises to the nucleus. In terms of biological role, involved in the transcriptional regulation of sericin-1 gene. In Bombyx mori (Silk moth), this protein is Silk gland factor 3 (SGF3).